A 272-amino-acid chain; its full sequence is HMP-PP phosphatase (272 aa).

The active-site Nucleophile is Asp-8. Mg(2+)-binding residues include Asp-8, Asp-10, and Asp-212.

Belongs to the HAD-like hydrolase superfamily. Cof family. Mg(2+) serves as cofactor.

It carries out the reaction 4-amino-2-methyl-5-(diphosphooxymethyl)pyrimidine + H2O = 4-amino-2-methyl-5-(phosphooxymethyl)pyrimidine + phosphate + H(+). Functionally, catalyzes the hydrolysis of 4-amino-2-methyl-5-hydroxymethylpyrimidine pyrophosphate (HMP-PP) to 4-amino-2-methyl-5-hydroxymethylpyrimidine phosphate (HMP-P). This chain is HMP-PP phosphatase, found in Escherichia coli (strain 55989 / EAEC).